Reading from the N-terminus, the 147-residue chain is Hemoglobin subunit beta (147 aa).

V2 is subject to N-acetylvaline. In terms of domain architecture, Globin spans 3-147 (HLSAEEKGHI…VATALAHKYH (145 aa)). K60 bears the N6-acetyllysine mark. Position 64 (H64) interacts with heme b. Position 83 is an N6-acetyllysine (K83). H93 lines the heme b pocket. Position 94 is an S-nitrosocysteine (C94). An N6-acetyllysine modification is found at K145.

Belongs to the globin family. In terms of assembly, heterotetramer of two alpha chains and two beta chains. Red blood cells.

Its function is as follows. Involved in oxygen transport from the lung to the various peripheral tissues. This chain is Hemoglobin subunit beta (HBB), found in Sminthopsis crassicaudata (Fat-tailed dunnart).